The chain runs to 92 residues: UPF0223 protein SSP1692 (92 aa).

This sequence belongs to the UPF0223 family.

This chain is UPF0223 protein SSP1692, found in Staphylococcus saprophyticus subsp. saprophyticus (strain ATCC 15305 / DSM 20229 / NCIMB 8711 / NCTC 7292 / S-41).